The sequence spans 891 residues: Putative alpha,alpha-trehalose-phosphate synthase [UDP-forming] 100 kDa subunit (891 aa).

T88 is subject to Phosphothreonine. The interval 88–126 (TGGSMTPGLGAMSPIPGSGRSSPLYTQPRSRATSPSRVR) is disordered. The span at 106–124 (GRSSPLYTQPRSRATSPSR) shows a compositional bias: polar residues. A phosphoserine mark is found at S108 and S109. The glycosyltransferase stretch occupies residues 132–613 (AAPGIGAGAL…VTGFETKLKK (482 aa)).

The protein in the N-terminal section; belongs to the glycosyltransferase 20 family.

It carries out the reaction D-glucose 6-phosphate + UDP-alpha-D-glucose = alpha,alpha-trehalose 6-phosphate + UDP + H(+). The protein is Putative alpha,alpha-trehalose-phosphate synthase [UDP-forming] 100 kDa subunit of Schizosaccharomyces pombe (strain 972 / ATCC 24843) (Fission yeast).